Here is a 144-residue protein sequence, read N- to C-terminus: Maximins 10/H3 (144 aa).

The signal sequence occupies residues 1-18 (MNFKYIVAVSFLIASAYA). The propeptide occupies 19–43 (RSVKNDEQSLSQRDVLDEESLREFR). Serine amide is present on serine 70. Positions 74 to 123 (TAEDHEVMKRLEAVMRDLDSLDYPEEATERETRGFNQEEIANLFTKKEKR) are excised as a propeptide. The residue at position 143 (isoleucine 143) is an Isoleucine amide.

This sequence belongs to the bombinin family. In terms of tissue distribution, expressed by the skin glands.

The protein localises to the secreted. In terms of biological role, maximin-10 shows antimicrobial activity against bacteria and against the fungus C.albicans. It has little hemolytic activity. Maximin-H3 shows antibacterial activity against both Gram-positive and Gram-negative bacteria. It also shows antimicrobial activity against the fungus C.albicans. Shows strong hemolytic activity. This is Maximins 10/H3 from Bombina maxima (Giant fire-bellied toad).